The following is a 96-amino-acid chain: U-stichotoxin-Hau2b (96 aa).

Positions 1-18 are cleaved as a signal peptide; that stretch reads MKPIFIVALLFSTCLVNA. Propeptides lie at residues 19–29 and 30–33; these read KPSIDDAEMKR and EPKP. 2 disulfides stabilise this stretch: C40–C51 and C43–C58. Propeptides lie at residues 62–64 and 65–68; these read RKR and EPKP. 2 cysteine pairs are disulfide-bonded: C75–C86 and C78–C93.

Belongs to the sea anemone BBH family.

The protein resides in the secreted. Its subcellular location is the nematocyst. Functionally, neurotoxin that paralyzes freshwater crabs at high concentration. The polypeptide is U-stichotoxin-Hau2b (Heteractis aurora (Banded sea anemone)).